A 208-amino-acid chain; its full sequence is Uracil phosphoribosyltransferase (208 aa).

Residues Arg-78, Arg-103, and 130–138 contribute to the 5-phospho-alpha-D-ribose 1-diphosphate site; that span reads DPMLATGGS. Uracil contacts are provided by residues Ile-193 and 198-200; that span reads GDA. Asp-199 provides a ligand contact to 5-phospho-alpha-D-ribose 1-diphosphate.

Belongs to the UPRTase family. Requires Mg(2+) as cofactor.

The catalysed reaction is UMP + diphosphate = 5-phospho-alpha-D-ribose 1-diphosphate + uracil. It functions in the pathway pyrimidine metabolism; UMP biosynthesis via salvage pathway; UMP from uracil: step 1/1. Its activity is regulated as follows. Allosterically activated by GTP. In terms of biological role, catalyzes the conversion of uracil and 5-phospho-alpha-D-ribose 1-diphosphate (PRPP) to UMP and diphosphate. This is Uracil phosphoribosyltransferase from Enterobacter sp. (strain 638).